A 539-amino-acid polypeptide reads, in one-letter code: MADLDAAWTRLEAAAKAAGDKRIVEFFDAEPGRLDALTLDVAGLHLDLSKQAWDEAGLEAALDLAHAADVEGARARMFDGEAINSSEGRAVLHTALRAPAGADVKALGQPVMAEVDAVRQRMKAFAQAVRSGAIKGATGKPFKAILHIGIGGSDLGPRLLWDALRPVKPSIDLRFVANVDGAEFALTTADMDPEETLVMVVSKTFTTQETMANAGAARAWLVAALGEQGANQHLAAISTALDKTAAFGVPDDRVFGFWDWVGGRYSLWSSVSLSVAVAAGWDAFQGFLDGGAAMDEHFRTAPLEQNAPVLVALAQIFNRNGLDRRARSVVPYSHRLRRLAAFLQQLEMESNGKSVGPDGQPAKRGTATVVFGDEGTNVQHAYFQCMHQGTDITPMELIGVAKSDEGPAGMHEKLLSNLLAQAEAFMVGRTTDDVVAELTAKGVSDAEIATLAPQRTFAGNRPSTLVLLDRLTPQTFGALIALYEHKTFVEGVIWGINSFDQWGVELGKVMANRILPELESGASGQHDPSTAGLIQRLKR.

Residue Glu349 is the Proton donor of the active site. Active-site residues include His380 and Lys508. Residues 519-539 are disordered; sequence ESGASGQHDPSTAGLIQRLKR.

It belongs to the GPI family.

Its subcellular location is the cytoplasm. It carries out the reaction alpha-D-glucose 6-phosphate = beta-D-fructose 6-phosphate. It participates in carbohydrate biosynthesis; gluconeogenesis. It functions in the pathway carbohydrate degradation; glycolysis; D-glyceraldehyde 3-phosphate and glycerone phosphate from D-glucose: step 2/4. Functionally, catalyzes the reversible isomerization of glucose-6-phosphate to fructose-6-phosphate. The sequence is that of Glucose-6-phosphate isomerase from Caulobacter vibrioides (strain ATCC 19089 / CIP 103742 / CB 15) (Caulobacter crescentus).